We begin with the raw amino-acid sequence, 247 residues long: DNA polymerase sliding clamp (247 aa).

This sequence belongs to the PCNA family. Homotrimer. The subunits circularize to form a toroid; DNA passes through its center. Replication factor C (RFC) is required to load the toroid on the DNA.

Functionally, sliding clamp subunit that acts as a moving platform for DNA processing. Responsible for tethering the catalytic subunit of DNA polymerase and other proteins to DNA during high-speed replication. The polypeptide is DNA polymerase sliding clamp (Thermofilum pendens (strain DSM 2475 / Hrk 5)).